The sequence spans 162 residues: Corticoliberin-1 (162 aa).

Positions 1–24 (MKLNFLVTTVALLVAFPPPYECRA) are cleaved as a signal peptide. Residues 25-119 (IDSSSNQPAT…ALDSEERERR (95 aa)) constitute a propeptide that is removed on maturation. Phe160 carries the phenylalanine amide modification.

Belongs to the sauvagine/corticotropin-releasing factor/urotensin I family.

Its subcellular location is the secreted. In terms of biological role, this hormone from hypothalamus regulates the release of corticotropin from pituitary gland. This chain is Corticoliberin-1 (crf1), found in Catostomus commersonii (White sucker).